A 1284-amino-acid chain; its full sequence is Neurexin-4 (1284 aa).

Positions 1-35 (MRPPRSNTKAAFSSLQFGLLCLLLLVNNGIKSVQA) are cleaved as a signal peptide. Residues 36 to 1217 (DAFTDYFSDY…LRKAYNEVDS (1182 aa)) are Extracellular-facing. The F5/8 type C domain maps to 47-185 (CNQPLMERAV…ISMRVELYGC (139 aa)). Cys47 and Cys185 are oxidised to a cystine. N-linked (GlcNAc...) asparagine glycans are attached at residues Asn195, Asn329, Asn340, and Asn398. In terms of domain architecture, Laminin G-like 1 spans 220–369 (FKTAFANGVM…FTRVNTIYAC (150 aa)). A disulfide bridge links Cys333 with Cys369. Positions 403 to 540 (FRTYEETGVM…CGDDVVVDAC (138 aa)) constitute a Laminin G-like 2 domain. 4 disulfide bridges follow: Cys507–Cys540, Cys546–Cys557, Cys551–Cys566, and Cys568–Cys578. One can recognise an EGF-like 1 domain in the interval 542-579 (MIDRCNPNPCQHKGLCHQNSREFFCDCGHTGYAGAVCH). Asn668 carries an N-linked (GlcNAc...) asparagine glycan. The Laminin G-like 3 domain maps to 824–962 (FRTTQENSVI…RGLYGISTGC (139 aa)). Intrachain disulfides connect Cys934–Cys962, Cys966–Cys977, Cys971–Cys986, and Cys988–Cys998. Residues 962–999 (CVGRCESNPCLNNGTCIERYDGYSCDCRWSAFKGPICA) enclose the EGF-like 2 domain. The N-linked (GlcNAc...) asparagine glycan is linked to Asn974. Positions 1032–1183 (FTTTIPKGFL…LGTQLTEDFC (152 aa)) constitute a Laminin G-like 4 domain. N-linked (GlcNAc...) asparagine glycosylation is found at Asn1047 and Asn1137. Cys1147 and Cys1183 are oxidised to a cystine. The chain crosses the membrane as a helical span at residues 1218 to 1238 (VLLACLLVILFLLLILMFFLI). The Cytoplasmic portion of the chain corresponds to 1239–1284 (GRYLHRHKGDYLTHEDQGADGADDPDDAVLHSTTGHQVRKRTEIFI).

The protein belongs to the neurexin family. In terms of assembly, forms a complex with Nrg and Cont. Forms a complex composed of septa junction proteins Nrx-IV/Nrx, Tsf2/MTf, Cont and Nrg during late embryogenesis. The C-terminal region interacts with coracle. Interacts with Patj in cis form. In terms of tissue distribution, found in septate junctions of epithelial and glial cells.

The protein resides in the cell membrane. The protein localises to the cell junction. It is found in the septate junction. Its function is as follows. Seems to play a role in the formation and function of septate junctions. Septate junctions, which are the equivalent of vertebrates tight junctions, are characterized by regular arrays of transverse structures that span the intermembrane space and form a physical barrier to diffusion. Required for the blood-brain barrier formation. The sequence is that of Neurexin-4 (Nrx-IV) from Drosophila melanogaster (Fruit fly).